The sequence spans 372 residues: tRNA pseudouridine synthase D (372 aa).

Aspartate 85 serves as the catalytic Nucleophile. Residues 160-330 (GFTNYFGYQR…MQGSRRFMWG (171 aa)) enclose the TRUD domain.

It belongs to the pseudouridine synthase TruD family.

The catalysed reaction is uridine(13) in tRNA = pseudouridine(13) in tRNA. Responsible for synthesis of pseudouridine from uracil-13 in transfer RNAs. The protein is tRNA pseudouridine synthase D of Campylobacter jejuni (strain RM1221).